The chain runs to 859 residues: Villin-like protein (859 aa).

Gelsolin-like repeat units lie at residues 24 to 76, 148 to 188, 264 to 308, 401 to 450, 521 to 561, and 624 to 665; these read LKML…EARE, VSAT…SEKA, LVVQ…QEKK, LQRQ…EDTK, TRTM…DQRE, and LVLT…WKKE. The HP domain maps to 793-859; it reads SMVNGSLPRE…QQAKKKLGFF (67 aa).

This sequence belongs to the villin/gelsolin family.

Its function is as follows. Possible tumor suppressor. In Mus musculus (Mouse), this protein is Villin-like protein.